A 346-amino-acid polypeptide reads, in one-letter code: Very-long-chain 3-oxoacyl-CoA reductase (346 aa).

A helical membrane pass occupies residues 26–46 (GASALLAAGSLFVVSRALVFV). NADP(+) contacts are provided by Val-71, Asp-126, Asp-134, Asn-153, Tyr-220, Lys-224, Ile-253, and Ser-255. Tyr-220 acts as the Proton donor in catalysis. The active-site Lowers pKa of active site Tyr is Lys-224.

Belongs to the short-chain dehydrogenases/reductases (SDR) family.

It localises to the endoplasmic reticulum membrane. It catalyses the reaction a very-long-chain (3R)-3-hydroxyacyl-CoA + NADP(+) = a very-long-chain 3-oxoacyl-CoA + NADPH + H(+). The protein operates within lipid metabolism; fatty acid biosynthesis. Component of the microsomal membrane bound fatty acid elongation system, which produces the 26-carbon very long-chain fatty acids (VLCFA) from palmitate. Catalyzes the reduction of the 3-ketoacyl-CoA intermediate that is formed in each cycle of fatty acid elongation. VLCFAs serve as precursors for ceramide and sphingolipids. This Aspergillus niger (strain ATCC MYA-4892 / CBS 513.88 / FGSC A1513) protein is Very-long-chain 3-oxoacyl-CoA reductase.